We begin with the raw amino-acid sequence, 1846 residues long: Brefeldin A-inhibited guanine nucleotide-exchange protein 1 (1846 aa).

Residues 2–224 form a DCB; DCB:DCB domain and DCB:HUS domain interaction region; the sequence is YEGKKTKNMF…QEAKQMERER (223 aa). At Ser52 the chain carries Phosphoserine. Disordered regions lie at residues 216 to 249, 264 to 304, and 347 to 410; these read EAKQ…LRYL, DLEP…ATAA, and ISAS…SPGA. Positions 264–277 are enriched in basic and acidic residues; that stretch reads DLEPQTHDVDKSLQ. Phosphoserine occurs at positions 286, 289, and 290. 2 stretches are compositionally biased toward polar residues: residues 348–357 and 391–406; these read SASTEGNTGT and SVSS…SSGP. Phosphoserine occurs at positions 394 and 407. The HUS; DCB:HUS domain interaction stretch occupies residues 554–574; that stretch reads ADAQSVVDIYVNYDCDLNAAN. Residues 631 to 684 form a disordered region; the sequence is PNSQTTLGQEKPSEQEISEVKHPETINRYGSLNSLESTSSSGIGSYSTQMSGTD. The span at 641–655 shows a compositional bias: basic and acidic residues; the sequence is KPSEQEISEVKHPET. Over residues 661–681 the composition is skewed to low complexity; the sequence is SLNSLESTSSSGIGSYSTQMS. Residues 688 to 877 form the SEC7 domain; the sequence is QFEVLKQQKE…SAIYNEIAGK (190 aa). The Nuclear localization signal (NLS) motif lies at 708-712; the sequence is KKPKR. Phosphoserine occurs at positions 1076, 1563, and 1566.

As to quaternary structure, homodimer. Interacts with ARFGEF2/BIG2; both proteins are probably part of the same or very similar macromolecular complexes. Interacts with FKBP2. Interacts with MYO9B. Interacts with PRKAR1A and PRKAR2A. Interacts with PPP1CC. Interacts with NCL, FBL, NUP62 and U3 small nucleolar RNA. Interacts with DPY30. Interacts with PDE3A. Interacts with KANK1. Interacts with TBC1D22A and TBC1D22B. In terms of processing, phosphorylated. In vitro phosphorylated by PKA reducing its GEF activity and dephosphorylated by phosphatase PP1.

It localises to the cytoplasm. The protein resides in the perinuclear region. It is found in the golgi apparatus. Its subcellular location is the trans-Golgi network. The protein localises to the nucleus. It localises to the nucleolus. The protein resides in the nucleus matrix. It is found in the membrane. With respect to regulation, inhibited by brefeldin A. Its function is as follows. Promotes guanine-nucleotide exchange on ARF1 and ARF3. Promotes the activation of ARF1/ARF3 through replacement of GDP with GTP. Involved in vesicular trafficking. Required for the maintenance of Golgi structure; the function may be independent of its GEF activity. Required for the maturation of integrin beta-1 in the Golgi. Involved in the establishment and persistence of cell polarity during directed cell movement in wound healing. Proposed to act as A kinase-anchoring protein (AKAP) and may mediate crosstalk between Arf and PKA pathways. Inhibits GAP activity of MYO9B probably through competitive RhoA binding. The function in the nucleus remains to be determined. This chain is Brefeldin A-inhibited guanine nucleotide-exchange protein 1 (Arfgef1), found in Mus musculus (Mouse).